The primary structure comprises 347 residues: NADH-quinone oxidoreductase subunit H (347 aa).

8 helical membrane passes run 13-33 (LLIL…VAYI), 82-102 (GVFL…WAVI), 115-135 (VGIL…IMGG), 161-181 (IGFV…SDIV), 198-218 (FLDW…ISAL), 248-268 (FLLF…LATI), 283-303 (FTWV…FFGI), and 321-341 (LGWK…AAFL).

It belongs to the complex I subunit 1 family. NDH-1 is composed of 14 different subunits. Subunits NuoA, H, J, K, L, M, N constitute the membrane sector of the complex.

It localises to the cell inner membrane. It carries out the reaction a quinone + NADH + 5 H(+)(in) = a quinol + NAD(+) + 4 H(+)(out). Its function is as follows. NDH-1 shuttles electrons from NADH, via FMN and iron-sulfur (Fe-S) centers, to quinones in the respiratory chain. The immediate electron acceptor for the enzyme in this species is believed to be ubiquinone. Couples the redox reaction to proton translocation (for every two electrons transferred, four hydrogen ions are translocated across the cytoplasmic membrane), and thus conserves the redox energy in a proton gradient. This subunit may bind ubiquinone. The protein is NADH-quinone oxidoreductase subunit H of Mesorhizobium japonicum (strain LMG 29417 / CECT 9101 / MAFF 303099) (Mesorhizobium loti (strain MAFF 303099)).